Reading from the N-terminus, the 334-residue chain is Holliday junction branch migration complex subunit RuvB (334 aa).

A large ATPase domain (RuvB-L) region spans residues 1 to 179 (MTHKISVLHQ…FAFTGRVDYY (179 aa)). Residues leucine 18, arginine 19, glycine 60, lysine 63, threonine 64, serine 65, 126–128 (EDF), arginine 169, tyrosine 179, and arginine 216 contribute to the ATP site. A Mg(2+)-binding site is contributed by threonine 64. The tract at residues 180–250 (TDEDLVSILS…VAEKALAMLL (71 aa)) is small ATPAse domain (RuvB-S). The segment at 253–334 (NLGLNEIDIK…RNPKDRWGEE (82 aa)) is head domain (RuvB-H). DNA contacts are provided by arginine 308 and arginine 313.

It belongs to the RuvB family. Homohexamer. Forms an RuvA(8)-RuvB(12)-Holliday junction (HJ) complex. HJ DNA is sandwiched between 2 RuvA tetramers; dsDNA enters through RuvA and exits via RuvB. An RuvB hexamer assembles on each DNA strand where it exits the tetramer. Each RuvB hexamer is contacted by two RuvA subunits (via domain III) on 2 adjacent RuvB subunits; this complex drives branch migration. In the full resolvosome a probable DNA-RuvA(4)-RuvB(12)-RuvC(2) complex forms which resolves the HJ.

It is found in the cytoplasm. It carries out the reaction ATP + H2O = ADP + phosphate + H(+). In terms of biological role, the RuvA-RuvB-RuvC complex processes Holliday junction (HJ) DNA during genetic recombination and DNA repair, while the RuvA-RuvB complex plays an important role in the rescue of blocked DNA replication forks via replication fork reversal (RFR). RuvA specifically binds to HJ cruciform DNA, conferring on it an open structure. The RuvB hexamer acts as an ATP-dependent pump, pulling dsDNA into and through the RuvAB complex. RuvB forms 2 homohexamers on either side of HJ DNA bound by 1 or 2 RuvA tetramers; 4 subunits per hexamer contact DNA at a time. Coordinated motions by a converter formed by DNA-disengaged RuvB subunits stimulates ATP hydrolysis and nucleotide exchange. Immobilization of the converter enables RuvB to convert the ATP-contained energy into a lever motion, pulling 2 nucleotides of DNA out of the RuvA tetramer per ATP hydrolyzed, thus driving DNA branch migration. The RuvB motors rotate together with the DNA substrate, which together with the progressing nucleotide cycle form the mechanistic basis for DNA recombination by continuous HJ branch migration. Branch migration allows RuvC to scan DNA until it finds its consensus sequence, where it cleaves and resolves cruciform DNA. This chain is Holliday junction branch migration complex subunit RuvB, found in Chlamydia trachomatis serovar L2 (strain ATCC VR-902B / DSM 19102 / 434/Bu).